We begin with the raw amino-acid sequence, 475 residues long: GTPase Der (475 aa).

EngA-type G domains lie at 3–167 (LTIA…GGER) and 205–380 (LRIA…RVWN). Residues 9–16 (GRPNVGKS), 56–60 (DTAGL), 119–122 (NKSE), 211–218 (GRPNTGKS), 258–262 (DTAGL), and 323–326 (NKWD) each bind GTP. Residues 381–465 (RRISTGKLNR…PIRISLRASD (85 aa)) form the KH-like domain.

The protein belongs to the TRAFAC class TrmE-Era-EngA-EngB-Septin-like GTPase superfamily. EngA (Der) GTPase family. In terms of assembly, associates with the 50S ribosomal subunit.

In terms of biological role, GTPase that plays an essential role in the late steps of ribosome biogenesis. The sequence is that of GTPase Der from Bartonella henselae (strain ATCC 49882 / DSM 28221 / CCUG 30454 / Houston 1) (Rochalimaea henselae).